We begin with the raw amino-acid sequence, 422 residues long: 3-phosphoshikimate 1-carboxyvinyltransferase (422 aa).

Lys-20, Ser-21, and Arg-25 together coordinate 3-phosphoshikimate. Lys-20 serves as a coordination point for phosphoenolpyruvate. Phosphoenolpyruvate contacts are provided by Gly-90 and Arg-118. The 3-phosphoshikimate site is built by Ser-163, Ser-164, Gln-165, Ser-191, Asp-306, and Lys-333. A phosphoenolpyruvate-binding site is contributed by Gln-165. The active-site Proton acceptor is the Asp-306. 2 residues coordinate phosphoenolpyruvate: Arg-337 and Arg-378.

Belongs to the EPSP synthase family. Monomer.

The protein resides in the cytoplasm. It carries out the reaction 3-phosphoshikimate + phosphoenolpyruvate = 5-O-(1-carboxyvinyl)-3-phosphoshikimate + phosphate. It participates in metabolic intermediate biosynthesis; chorismate biosynthesis. In terms of biological role, catalyzes the transfer of the enolpyruvyl moiety of phosphoenolpyruvate (PEP) to the 5-hydroxyl of shikimate-3-phosphate (S3P) to produce enolpyruvyl shikimate-3-phosphate and inorganic phosphate. The chain is 3-phosphoshikimate 1-carboxyvinyltransferase from Methanocella arvoryzae (strain DSM 22066 / NBRC 105507 / MRE50).